The chain runs to 255 residues: MPYLYRIAYDGTLFYGFTGHPRSLEPHLRRALGDVLGRGSRTDPGVSAVGNVVMTSAKVQPAAANSKLPRGVWVWAAAEVPEGFNPRRARSRHYLYVAPHWGEDLDSMREAAELLAGTHDYASFVQRRGEPASTVTTIFSITVETRGDLVFLHFVGRGFRNKMIRKLAWAILAAGRGVLRKRDIADLLERPKPGAVPSAPAEGLVLLDIDYGVEFQVDYPSLRKAYRYFLWRYRYAAAHAAVFKAAGEALAAWEE.

Aspartate 43 (nucleophile) is an active-site residue. Tyrosine 94 contacts substrate.

Belongs to the tRNA pseudouridine synthase TruA family.

It catalyses the reaction uridine(38/39/40) in tRNA = pseudouridine(38/39/40) in tRNA. Its function is as follows. Formation of pseudouridine at positions 38, 39 and 40 in the anticodon stem and loop of transfer RNAs. The chain is tRNA pseudouridine synthase A from Pyrobaculum neutrophilum (strain DSM 2338 / JCM 9278 / NBRC 100436 / V24Sta) (Thermoproteus neutrophilus).